Consider the following 490-residue polypeptide: UDP-N-acetylmuramate--L-alanine ligase (490 aa).

133 to 139 (GTHGKTS) is an ATP binding site.

This sequence belongs to the MurCDEF family.

It localises to the cytoplasm. It carries out the reaction UDP-N-acetyl-alpha-D-muramate + L-alanine + ATP = UDP-N-acetyl-alpha-D-muramoyl-L-alanine + ADP + phosphate + H(+). The protein operates within cell wall biogenesis; peptidoglycan biosynthesis. Functionally, cell wall formation. This Saccharopolyspora erythraea (strain ATCC 11635 / DSM 40517 / JCM 4748 / NBRC 13426 / NCIMB 8594 / NRRL 2338) protein is UDP-N-acetylmuramate--L-alanine ligase.